Consider the following 310-residue polypeptide: Ribosome production factor 2 homolog (310 aa).

Positions 29–239 (KKTLILHGTK…VRRHRYPVES (211 aa)) constitute a Brix domain. The segment at 281–310 (LSNDVKGLKRERREAKKNKDHSKKQKINPE) is disordered. Positions 295–310 (AKKNKDHSKKQKINPE) are enriched in basic residues.

It belongs to the RPF2 family.

Its subcellular location is the nucleus. The protein resides in the nucleolus. This is Ribosome production factor 2 homolog from Oryza sativa subsp. japonica (Rice).